Reading from the N-terminus, the 270-residue chain is NAD kinase (270 aa).

Catalysis depends on D63, which acts as the Proton acceptor. Residues 63–64 (DG), R68, 131–132 (NE), K142, R159, D161, 172–177 (TAYAMS), A196, and Q230 contribute to the NAD(+) site.

It belongs to the NAD kinase family. The cofactor is a divalent metal cation.

It is found in the cytoplasm. It catalyses the reaction NAD(+) + ATP = ADP + NADP(+) + H(+). Its function is as follows. Involved in the regulation of the intracellular balance of NAD and NADP, and is a key enzyme in the biosynthesis of NADP. Catalyzes specifically the phosphorylation on 2'-hydroxyl of the adenosine moiety of NAD to yield NADP. The sequence is that of NAD kinase from Methanoregula boonei (strain DSM 21154 / JCM 14090 / 6A8).